Reading from the N-terminus, the 387-residue chain is Probable G-protein coupled receptor 173 (387 aa).

The Extracellular portion of the chain corresponds to 1–40 (MANGNASSDGPGNPLAAVVSTTGGVMGGAPSSAVSTYVKL). A glycan (N-linked (GlcNAc...) asparagine) is linked at asparagine 5. Residues 41–61 (VLLGLIICISLVGNLVVSLLV) form a helical membrane-spanning segment. At 62–87 (LRDRALHKAPYYFLLDLCLADTIRSA) the chain is on the cytoplasmic side. A helical transmembrane segment spans residues 88-108 (VCFPFVLVSIKNGSAWTYSVL). Residues 109–111 (SCK) lie on the Extracellular side of the membrane. Cysteine 110 and cysteine 188 are oxidised to a cystine. The helical transmembrane segment at 112–132 (VVAFMAVLFCFHAAFMLFCIS) threads the bilayer. Residues 133-153 (VTRYMAIAHHRFYSKRMTFWT) lie on the Cytoplasmic side of the membrane. Residues 154–174 (CVAVVCMVWTLSVAMAFPPVF) form a helical membrane-spanning segment. The Extracellular portion of the chain corresponds to 175–202 (DVGTYKFIREEDQCIFEHRYFKANDTLG). The N-linked (GlcNAc...) asparagine glycan is linked to asparagine 198. A helical membrane pass occupies residues 203 to 223 (FMLMLAVLILATHVVYMKLLL). Topologically, residues 224-301 (FEYKHRKMKP…FKAEKQLGRM (78 aa)) are cytoplasmic. Residues 302–322 (FYVITLFFLVLWSPYIVACYW) form a helical membrane-spanning segment. Residues 323-335 (RVFVKACTIPHRY) lie on the Extracellular side of the membrane. Residues 336–356 (LSTTVWMSFAQAGVNPIICFF) traverse the membrane as a helical segment. Topologically, residues 357–387 (LNKDLKKGLLAHLPPCCRTPPQLPREPYCVM) are cytoplasmic.

The protein belongs to the G-protein coupled receptor 1 family.

The protein localises to the cell membrane. Functionally, is a receptor for the SMIM20 derived peptides Phoenixin-14 and Phoenixin-20. It mediates the Phoenixin-14 and Phoenixin-20 augmentation of gonadotropin-releasing hormone (GNRH) signaling in the hypothalamus and pituitary gland. In the ovary, it mediates the effects of Phoenixin-14 and Phoenixin-20 induced granulosa cell proliferation during follicular growth. The protein is Probable G-protein coupled receptor 173 (gpr173) of Danio rerio (Zebrafish).